Consider the following 237-residue polypeptide: Ankyrin repeat protein 14 (237 aa).

ANK repeat units lie at residues 27–56 and 60–90; these read RGETLLHKAVRYNKQSLVSLLLESGSDVNI and NGYTCIAIAINESRNIELLKMLLCHKPTLDC.

Its function is as follows. May be involved in virus-host protein interaction through the ankyrin repeats. The polypeptide is Ankyrin repeat protein 14 (Vaccinia virus (strain Western Reserve) (VACV)).